Here is a 243-residue protein sequence, read N- to C-terminus: uncharacterized protein (243 aa).

Its subcellular location is the nucleus. The protein localises to the nucleolus. This is an uncharacterized protein from Schizosaccharomyces pombe (strain 972 / ATCC 24843) (Fission yeast).